The sequence spans 1111 residues: Nuclear migration and anchoring protein unc-84 (1111 aa).

Residues 1-509 lie on the Nuclear side of the membrane; the sequence is MAPATEADNN…LTDKKSSKFS (509 aa). 2 required for nuclear envelope localization regions span residues 118–244 and 503–507; these read YILR…SQTL and KKSSK. The disordered stretch occupies residues 232–253; that stretch reads ERASRMTTRSQTLERSRKFDGL. Residues 243–252 show a composition bias toward basic and acidic residues; it reads TLERSRKFDG. The helical transmembrane segment at 510 to 530 threads the bilayer; that stretch reads WCQILGLLLALLFAIFLLGFL. Topologically, residues 531–1111 are perinuclear space; that stretch reads TSDNTAIRVK…LRVHGKVVQV (581 aa). The tract at residues 912-1111 is interaction with zyg-12; that stretch reads QYDKNHLEAI…LRVHGKVVQV (200 aa). The SUN domain occupies 945–1109; the sequence is GGAVVSTRCS…YRLRVHGKVV (165 aa).

In terms of assembly, component of the unc-83-unc-84 LINC complex which contains at least unc-83 and unc-84. Within the unc-83-unc-84 LINC complex interacts (via C-terminus) with unc-83; the interaction is probably required to recruit unc-83 to the nuclear membrane. Most likely interacts with anc-1; the interaction is probably required to recruit anc-1 to the nuclear envelope. Interacts (via C-terminus) with zyg-12 (via C-terminus); the interaction is direct. May interact with lmn-1; this interaction may be required to complete the connection between the nuclear lamina and the cytoskeleton. As to expression, expressed in all somatic cells. Not expressed in germ cells in the mitotic and transition zones of the gonad. One study shows expression at the beginning of the late pachytene stage in the proximal gonad, but there is no expression in the male germline, suggesting expression is specific to oogenesis in hermaphrodites.

The protein localises to the nucleus inner membrane. The protein resides in the cytoplasm. It is found in the cytoskeleton. Functionally, involved in nuclear migration and anchoring in hypodermal precursor cells. Most likely recruits anc-1 to the nuclear envelope where anc-1 functions to tether the nucleus to the actin cytoskeleton. Component of the unc-83-unc-84 LINC (LInker of Nucleoskeleton and Cytoskeleton) complex where it recruits and interacts with unc-83 to form a bridge connecting the nuclear envelope to the cytoskeleton which allows for nuclear transport along microtubules. Its role in nuclear migration may be in association with lamin, lmn-1. Regulates nuclear migrations in one-cell embryos, controlling the posterior migration of the male pronucleus following fertilization. Not required for centrosome attachment to the nucleus. Plays a role in the maintenance of the nuclear envelope architecture in body wall muscle cells. May be involved in DNA damage repair through an association with zyg-12. Potentially has roles in homologous recombination, double strand break repair and meiotic recombination. Specifically, may in part inhibit non-homologous end joining repair, most likely through recruiting fan-1 to the nucleoplasm, to facilitate the repair of DNA cross-links. The chain is Nuclear migration and anchoring protein unc-84 from Caenorhabditis elegans.